A 339-amino-acid chain; its full sequence is Phosphoribosylformylglycinamidine cyclo-ligase (339 aa).

It belongs to the AIR synthase family.

The protein localises to the cytoplasm. It carries out the reaction 2-formamido-N(1)-(5-O-phospho-beta-D-ribosyl)acetamidine + ATP = 5-amino-1-(5-phospho-beta-D-ribosyl)imidazole + ADP + phosphate + H(+). Its pathway is purine metabolism; IMP biosynthesis via de novo pathway; 5-amino-1-(5-phospho-D-ribosyl)imidazole from N(2)-formyl-N(1)-(5-phospho-D-ribosyl)glycinamide: step 2/2. The protein is Phosphoribosylformylglycinamidine cyclo-ligase of Streptococcus thermophilus (strain ATCC BAA-491 / LMD-9).